The following is a 603-amino-acid chain: Elongation factor 4 (603 aa).

The tr-type G domain maps to 7-189 (SRIRNFSIIA…SIVHLVPPPE (183 aa)). Residues 19 to 24 (DHGKST) and 136 to 139 (NKID) each bind GTP.

It belongs to the TRAFAC class translation factor GTPase superfamily. Classic translation factor GTPase family. LepA subfamily.

It is found in the cell inner membrane. It carries out the reaction GTP + H2O = GDP + phosphate + H(+). In terms of biological role, required for accurate and efficient protein synthesis under certain stress conditions. May act as a fidelity factor of the translation reaction, by catalyzing a one-codon backward translocation of tRNAs on improperly translocated ribosomes. Back-translocation proceeds from a post-translocation (POST) complex to a pre-translocation (PRE) complex, thus giving elongation factor G a second chance to translocate the tRNAs correctly. Binds to ribosomes in a GTP-dependent manner. The sequence is that of Elongation factor 4 from Acaryochloris marina (strain MBIC 11017).